Consider the following 61-residue polypeptide: Large ribosomal subunit protein bL32 (61 aa).

Over residues 1–19 the composition is skewed to basic residues; it reads MAHPKRRQSKTRTAKRRTH. Positions 1-20 are disordered; sequence MAHPKRRQSKTRTAKRRTHD.

This sequence belongs to the bacterial ribosomal protein bL32 family.

This chain is Large ribosomal subunit protein bL32, found in Porphyromonas gingivalis (strain ATCC 33277 / DSM 20709 / CIP 103683 / JCM 12257 / NCTC 11834 / 2561).